The primary structure comprises 476 residues: MDFEAVIGLEVHAELSTNTKIYCGCTTEFGGQPNTHVCPICLGLPGSLPQLNKRVVEYGIKAGLALNCSINKVCRMDRKNYFYPDCPKNYQITQDEVPICRDGYIEIELENGEKKKIGIERIHMEEDAGKLLHTNAGTLVDYNRAGVPLIEIVSRPDIRTPEEATKYLEKLKSILSSIEVSDCKMEQGSLRCDGNISVMPKGSEKFGVRSEIKNMNSFKALEKALSYEYDRHVEAVTKGEILEQETRRWDEANSVTVLMRSKEKANDYRYFPEGDLVTLNISDEWIEEVRKTIPELPHEKAERFVNEFRIPKYDAMVLTLTMDMAKFFEETTLKSEDAKATSNWLMGDISRLMNEKTIEVKDLKFNPEQLAELIKLINAGTISNNIGKKVLDDMFKSGKSPKDIVEEKGLVQNNDEGAILEVVKKIIENNPQSIEDFKNGKKRALGFLVGLVMKETKGKANPQIVNKLVSEEANKM.

Belongs to the GatB/GatE family. GatB subfamily. As to quaternary structure, heterotrimer of A, B and C subunits.

It catalyses the reaction L-glutamyl-tRNA(Gln) + L-glutamine + ATP + H2O = L-glutaminyl-tRNA(Gln) + L-glutamate + ADP + phosphate + H(+). It carries out the reaction L-aspartyl-tRNA(Asn) + L-glutamine + ATP + H2O = L-asparaginyl-tRNA(Asn) + L-glutamate + ADP + phosphate + 2 H(+). Its function is as follows. Allows the formation of correctly charged Asn-tRNA(Asn) or Gln-tRNA(Gln) through the transamidation of misacylated Asp-tRNA(Asn) or Glu-tRNA(Gln) in organisms which lack either or both of asparaginyl-tRNA or glutaminyl-tRNA synthetases. The reaction takes place in the presence of glutamine and ATP through an activated phospho-Asp-tRNA(Asn) or phospho-Glu-tRNA(Gln). The chain is Aspartyl/glutamyl-tRNA(Asn/Gln) amidotransferase subunit B from Clostridium botulinum (strain Kyoto / Type A2).